Here is a 441-residue protein sequence, read N- to C-terminus: Alpha-methylserine aldolase (441 aa).

Residue K256 is modified to N6-(pyridoxal phosphate)lysine.

Belongs to the SHMT family. Alpha-methylserine aldolase subfamily. In terms of assembly, homodimer. Pyridoxal 5'-phosphate is required as a cofactor.

The catalysed reaction is 2-methyl-L-serine = formaldehyde + L-alanine. Functionally, catalyzes the reversible interconversion of alpha-methyl-L-serine to L-alanine and formaldehyde. In Variovorax paradoxus, this protein is Alpha-methylserine aldolase.